A 317-amino-acid chain; its full sequence is Probable porphobilinogen deaminase (317 aa).

Cysteine 234 carries the S-(dipyrrolylmethanemethyl)cysteine modification.

It belongs to the HMBS family. Requires dipyrromethane as cofactor.

It catalyses the reaction 4 porphobilinogen + H2O = hydroxymethylbilane + 4 NH4(+). It functions in the pathway porphyrin-containing compound metabolism; protoporphyrin-IX biosynthesis; coproporphyrinogen-III from 5-aminolevulinate: step 2/4. Its function is as follows. Tetrapolymerization of the monopyrrole PBG into the hydroxymethylbilane pre-uroporphyrinogen in several discrete steps. This chain is Probable porphobilinogen deaminase, found in Methanosarcina acetivorans (strain ATCC 35395 / DSM 2834 / JCM 12185 / C2A).